The chain runs to 1469 residues: WASH complex subunit 2 (1469 aa).

Serine 136 is modified (phosphoserine). Disordered stretches follow at residues 178–349 and 367–546; these read YDSK…RMPV and KVQS…RVAG. The segment covering 197–206 has biased composition (basic and acidic residues); that stretch reads SDEKEPETKK. Residue serine 227 is modified to Phosphoserine. 2 stretches are compositionally biased toward low complexity: residues 276–293 and 306–316; these read SPPSDDPPSTSSSPTSSP and STASLSSSSSS. An LFa 1 motif is present at residues 351-372; sequence LFNEDEFKSFMSEIVDKVQSKT. Positions 370–385 are enriched in polar residues; sequence SKTPSSSVSPATTIST. The segment covering 387 to 399 has biased composition (basic and acidic residues); it reads EPPKTKKPVEEYP. A phosphoserine mark is found at serine 422 and serine 426. The segment covering 519-528 has biased composition (acidic residues); that stretch reads FDDDDLDIDD. The LFa 5 motif lies at 550–563; the sequence is LFEDDDQDDVTDLF. Positions 571-591 are disordered; that stretch reads IPKETSSGVSPNKNVETPVAS. Residues 574-585 show a composition bias toward polar residues; it reads ETSSGVSPNKNV. At serine 580 the chain carries Phosphoserine. At threonine 587 the chain carries Phosphothreonine. The LFa 6 signature appears at 595–605; sequence LFDDIEDEDLF. Disordered stretches follow at residues 607-760, 933-1254, and 1316-1469; these read TPKA…TDLF, ALPN…KLFS, and VTTA…LDFK. Basic and acidic residues-rich tracts occupy residues 626–649 and 671–687; these read GEDKKQSEIAEQKSKNIETGEKQH and TEQKSDDKEWEAVKDDT. The residue at position 693 (threonine 693) is a Phosphothreonine. The LFa 8 motif lies at 698–709; it reads LFSEDLTDDELF. Polar residues-rich tracts occupy residues 709 to 728, 735 to 745, and 938 to 956; these read FSSTSNNMAEPKSANETNEF, YTSQTEENVSP, and PSATKPSPVTPGDQPSVSS. Composition is skewed to basic and acidic residues over residues 971-990, 1031-1042, and 1077-1089; these read DNDHAGEEVQKEAEPQKDEL, ETDRSEVKETPE, and RKQESSSSERDEP. The span at 1091–1109 shows a compositional bias: polar residues; sequence ATVQTEAEAPSSGQNTVSS. Residues 1118–1136 are compositionally biased toward basic residues; that stretch reads NKSRARGPAKRRPSTRRGR. The span at 1159–1170 shows a compositional bias: basic and acidic residues; that stretch reads DSPEVEHSERSS. 7 positions are modified to phosphoserine: serine 1241, serine 1245, serine 1254, serine 1344, serine 1380, serine 1381, and serine 1408. Composition is skewed to low complexity over residues 1417-1426 and 1434-1452; these read FGGSSTSKAA and AARTASKPPASKTTTPTAT.

Belongs to the FAM21 family. As to quaternary structure, component of the WASH complex.

Functionally, acts at least in part as component of the WASH complex which may regulate wash nucleation-promoting factor (NPF) activity and is required for its membrane targeting during endosomal sorting. This is WASH complex subunit 2 from Drosophila melanogaster (Fruit fly).